Reading from the N-terminus, the 146-residue chain is Snaclec coagulation factor X-activating enzyme light chain 1 (146 aa).

The signal sequence occupies residues 1–23 (MGRFISVSFGCLVVFLSLSGTEA). An intrachain disulfide couples Cys27 to Cys38. In terms of domain architecture, C-type lectin spans 34 to 145 (YEQHCYKGFN…CNFIAPVVCK (112 aa)). Residue Asn47 is glycosylated (N-linked (GlcNAc...) (complex) asparagine). Intrachain disulfides connect Cys55–Cys144 and Cys121–Cys136.

This sequence belongs to the snaclec family. As to quaternary structure, heterotrimer; disulfide-linked. The heterotrimer consists of 1 heavy chain (a metalloproteinase) and 2 light chains: LC1 and LC2. In terms of processing, N-glycosylated; probably required for conformation. Removal of easily accessible sugars does not change its functional capacity, but removal of the core sugars with N-glycanase causes a virtually complete loss of enzyme activity, apparently as a result of major conformational changes in the molecule. Not O-glycosylated. As to expression, expressed by the venom gland.

The protein resides in the secreted. Regulatory subunit of the blood coagulation factor X- and IX-activating enzyme. The enzyme activates coagulation factor X (F10) by cleaving the Arg-Ile bond and is also able to activate coagulation factor IX (F9) and protein S (PROS1) by specific cleavage of Arg-Ile and Arg-Val bonds. May serve as an exosite by which the enzyme recognizes and binds to the Gla domain of factor X (F10) and factor IX (F9) in a calcium-dependent manner. This Daboia siamensis (Eastern Russel's viper) protein is Snaclec coagulation factor X-activating enzyme light chain 1 (LC1).